Reading from the N-terminus, the 555-residue chain is Urocanate hydratase (555 aa).

NAD(+) is bound by residues 52-53 (GG), Gln-130, 176-178 (GMG), Glu-196, Arg-201, 242-243 (NA), 263-267 (QTSAH), 273-274 (YL), and Tyr-322. Cys-410 is an active-site residue. Residue Gly-492 coordinates NAD(+).

The protein belongs to the urocanase family. NAD(+) serves as cofactor.

The protein localises to the cytoplasm. It catalyses the reaction 4-imidazolone-5-propanoate = trans-urocanate + H2O. It participates in amino-acid degradation; L-histidine degradation into L-glutamate; N-formimidoyl-L-glutamate from L-histidine: step 2/3. Functionally, catalyzes the conversion of urocanate to 4-imidazolone-5-propionate. The chain is Urocanate hydratase from Shewanella baltica (strain OS155 / ATCC BAA-1091).